Reading from the N-terminus, the 228-residue chain is PKHD-type hydroxylase XC_1340 (228 aa).

The Fe2OG dioxygenase domain occupies 78 to 180 (RIYPPLFNRY…RVASFFWIQS (103 aa)). Fe cation-binding residues include His-96, Asp-98, and His-161. Position 171 (Arg-171) interacts with 2-oxoglutarate.

Fe(2+) is required as a cofactor. It depends on L-ascorbate as a cofactor.

In Xanthomonas campestris pv. campestris (strain 8004), this protein is PKHD-type hydroxylase XC_1340.